A 382-amino-acid polypeptide reads, in one-letter code: Pyrimidine monooxygenase RutA (382 aa).

Residues 68-69 (IK), Asn-134, Glu-143, 159-160 (RY), and Ser-209 contribute to the FMN site.

This sequence belongs to the NtaA/SnaA/DszA monooxygenase family. RutA subfamily.

The enzyme catalyses uracil + FMNH2 + NADH + O2 = (Z)-3-ureidoacrylate + FMN + NAD(+) + H2O + H(+). It catalyses the reaction thymine + FMNH2 + NADH + O2 = (Z)-2-methylureidoacrylate + FMN + NAD(+) + H2O + H(+). Functionally, catalyzes the pyrimidine ring opening between N-3 and C-4 by an unusual flavin hydroperoxide-catalyzed mechanism, adding oxygen atoms in the process to yield ureidoacrylate peracid, that immediately reacts with FMN forming ureidoacrylate and FMN-N(5)-oxide. The FMN-N(5)-oxide reacts spontaneously with NADH to produce FMN. Requires the flavin reductase RutF to regenerate FMN in vivo. In Escherichia coli O157:H7, this protein is Pyrimidine monooxygenase RutA (rutA).